The chain runs to 307 residues: tRNA dimethylallyltransferase 1 (307 aa).

G10–T17 contributes to the ATP binding site. T12–T17 is a binding site for substrate. The segment at D35–Q38 is interaction with substrate tRNA.

The protein belongs to the IPP transferase family. Monomer. Requires Mg(2+) as cofactor.

It carries out the reaction adenosine(37) in tRNA + dimethylallyl diphosphate = N(6)-dimethylallyladenosine(37) in tRNA + diphosphate. Catalyzes the transfer of a dimethylallyl group onto the adenine at position 37 in tRNAs that read codons beginning with uridine, leading to the formation of N6-(dimethylallyl)adenosine (i(6)A). This chain is tRNA dimethylallyltransferase 1, found in Geotalea daltonii (strain DSM 22248 / JCM 15807 / FRC-32) (Geobacter daltonii).